The primary structure comprises 318 residues: Apo-salmochelin esterase (318 aa).

The helical transmembrane segment at 13–32 (KAIFFHLSCLTLICSAQVYA) threads the bilayer. Active-site residues include Ser189 and His287.

Belongs to the esterase D family. In terms of assembly, monomer.

The protein localises to the cell inner membrane. It carries out the reaction enterobactin + H2O = N-(2,3-dihydroxybenzoyl)-L-serine trimer. The enzyme catalyses monoglucosyl-enterobactin + H2O = [N-(2,3-dihydroxybenzoyl)-L-seryl]2-N-(C-5-[deoxy-beta-D-glucosyl]-2,3-dihydroxybenzoyl)-L-serine + H(+). The catalysed reaction is diglucosyl-enterobactin + H2O = N-(2,3-dihydroxybenzoyl)-L-seryl-[N-(C-5-[deoxy-beta-D-glucosyl]-2,3-dihydroxybenzoyl)-L-serine]2 + H(+). It catalyses the reaction triglucosyl-enterobactin + H2O = [N-(C-5-[deoxy-beta-D-glucosyl]-2,3-dihydroxybenzoyl)-L-serine]3 + H(+). In terms of biological role, catalyzes the hydrolysis of both the apo and Fe3(+)-bound forms of enterobactin (Ent), monoglucosyl-C-Ent (MGE), diglucosyl-C-Ent (DGE) and triglucosyl-C-Ent (TGE). It prefers apo siderophores as substrates and hydrolyzes the Fe3(+)-bound siderophores very inefficiently. Tends to hydrolyze the trilactone just once to produce linearized trimers. May hydrolyze and linearize some or all of apo enterobactins while they are being exported. This chain is Apo-salmochelin esterase, found in Escherichia coli O6:H1 (strain CFT073 / ATCC 700928 / UPEC).